A 368-amino-acid chain; its full sequence is DNA replication and repair protein RecF (368 aa).

30 to 37 (GDNGAGKT) is an ATP binding site.

The protein belongs to the RecF family.

The protein resides in the cytoplasm. The RecF protein is involved in DNA metabolism; it is required for DNA replication and normal SOS inducibility. RecF binds preferentially to single-stranded, linear DNA. It also seems to bind ATP. This Xanthomonas euvesicatoria pv. vesicatoria (strain 85-10) (Xanthomonas campestris pv. vesicatoria) protein is DNA replication and repair protein RecF.